We begin with the raw amino-acid sequence, 417 residues long: Serine hydroxymethyltransferase 1 (417 aa).

Residues leucine 121 and 125–127 (GHL) contribute to the (6S)-5,6,7,8-tetrahydrofolate site. An N6-(pyridoxal phosphate)lysine modification is found at lysine 229. 354 to 356 (SPF) serves as a coordination point for (6S)-5,6,7,8-tetrahydrofolate.

This sequence belongs to the SHMT family. In terms of assembly, homodimer. Pyridoxal 5'-phosphate is required as a cofactor.

Its subcellular location is the cytoplasm. It catalyses the reaction (6R)-5,10-methylene-5,6,7,8-tetrahydrofolate + glycine + H2O = (6S)-5,6,7,8-tetrahydrofolate + L-serine. It participates in one-carbon metabolism; tetrahydrofolate interconversion. The protein operates within amino-acid biosynthesis; glycine biosynthesis; glycine from L-serine: step 1/1. Functionally, catalyzes the reversible interconversion of serine and glycine with tetrahydrofolate (THF) serving as the one-carbon carrier. This reaction serves as the major source of one-carbon groups required for the biosynthesis of purines, thymidylate, methionine, and other important biomolecules. Also exhibits THF-independent aldolase activity toward beta-hydroxyamino acids, producing glycine and aldehydes, via a retro-aldol mechanism. This chain is Serine hydroxymethyltransferase 1, found in Pseudomonas fluorescens (strain ATCC BAA-477 / NRRL B-23932 / Pf-5).